Here is a 1137-residue protein sequence, read N- to C-terminus: Ribonucleoside-diphosphate reductase large subunit (1137 aa).

The segment at 1-32 (MASRPAASSPVEARAPVGGQEAGGPSAATQGE) is disordered. Residues 64–84 (SYRISDNNFVQCGSNCTMIID) carry the RIP homotypic interaction motif (RHIM) motif. Disordered regions lie at residues 124–159 (GGTP…FTLG) and 173–315 (AVFG…YPVP). Residues 131–141 (AGTSTGTQTAD) are compositionally biased toward polar residues. Residues 196–206 (SDSDDSEDTDS) are compositionally biased toward acidic residues. Residues 281-290 (AGAGLAADPA) are compositionally biased toward low complexity. Basic and acidic residues predominate over residues 291-304 (VARDDAEGLSDPRP). Substrate contacts are provided by residues Thr566, 581–582 (SC), Gly612, 791–795 (NLCTE), and 968–972 (PTAAS). Residues Cys582 and Cys808 are joined by a disulfide bond. The active-site Proton acceptor is the Asn791. The Cysteine radical intermediate role is filled by Cys793. The Proton acceptor role is filled by Glu795.

Belongs to the ribonucleoside diphosphate reductase large chain family. In terms of assembly, heterotetramer composed of a homodimer of the large subunit (R1) and a homodimer of the small subunit (R2). Larger multisubunit protein complex are also active, composed of (R1)n(R2)n. Self-assembles (via RIP homotypic interaction motif/RHIM) into homomeric fibrillar amyloid structures. Interacts (via RHIM) with human RIPK1 (via RHIM). Interacts (via RHIM) with human RIPK3 (via RHIM); the interaction leads to heteromeric amyloid assemblies. Interacts (via RHIM) with human ZBP1 (via RHIM); the interaction leads to heteromeric amyloid assemblies. Interacts (via C-terminus) with host CASP8.

The catalysed reaction is a 2'-deoxyribonucleoside 5'-diphosphate + [thioredoxin]-disulfide + H2O = a ribonucleoside 5'-diphosphate + [thioredoxin]-dithiol. In terms of biological role, ribonucleoside-diphosphate reductase holoenzyme that provides the precursors necessary for viral DNA synthesis. Allows virus growth in non-dividing cells, as well as reactivation from latency in infected hosts. Catalyzes the biosynthesis of deoxyribonucleotides from the corresponding ribonucleotides. Prevents host necroptosis by targeting host RIPK1 and RIPK3, thereby hampering the formation of necroptotic RIPK1-RIPK3 complexes. Forms hetero-amyloid structures with host proteins RIPK3 or ZBP1 which may prevent RIPK3- and ZBP1-mediated necroptosis. In addition, inhibits extrinsic apoptosis by targeting host CASP8. The chain is Ribonucleoside-diphosphate reductase large subunit from Human herpesvirus 1 (strain 17) (HHV-1).